Here is a 380-residue protein sequence, read N- to C-terminus: Putative zinc finger protein C02F5.12 (380 aa).

The interval 137-187 (NLDIPGTSSDIPSDPSSALKVPKKEVLDESEEILDQTSGSSSFSLNDSEQA) is disordered. Polar residues-rich tracts occupy residues 142–152 (GTSSDIPSDPS) and 171–187 (DQTS…SEQA). Residues 271 to 294 (IPCKLCGFECTNVRRMRSHYAKAH) form a C2H2-type zinc finger.

It is found in the nucleus. This is Putative zinc finger protein C02F5.12 from Caenorhabditis elegans.